Here is a 641-residue protein sequence, read N- to C-terminus: FACT complex subunit SSRP1-A (641 aa).

The tract at residues 459–561 (TDDDAVDPHL…DPNAPKRAMT (103 aa)) is disordered. Positions 476-487 (GDEESDEEDEDF) are enriched in acidic residues. Residues 512–524 (GGEKEKLSKKEAS) show a composition bias toward basic and acidic residues. The segment at residues 556–624 (PKRAMTPFMY…RYEKESAVYR (69 aa)) is a DNA-binding region (HMG box).

It belongs to the SSRP1 family. In terms of assembly, component of the FACT complex, a stable heterodimer of SPT16 and SSRP1.

It localises to the nucleus. Its subcellular location is the chromosome. Component of the FACT complex, a general chromatin factor that acts to reorganize nucleosomes. The FACT complex is involved in multiple processes that require DNA as a template such as mRNA elongation, DNA replication and DNA repair. During transcription elongation the FACT complex acts as a histone chaperone that both destabilizes and restores nucleosomal structure. It facilitates the passage of RNA polymerase II and transcription by promoting the dissociation of one histone H2A-H2B dimer from the nucleosome, then subsequently promotes the reestablishment of the nucleosome following the passage of RNA polymerase II. Binds specifically to double-stranded DNA. The protein is FACT complex subunit SSRP1-A (SSRP1-A) of Oryza sativa subsp. japonica (Rice).